A 96-amino-acid chain; its full sequence is Aspartyl/glutamyl-tRNA(Asn/Gln) amidotransferase subunit C (96 aa).

Belongs to the GatC family. Heterotrimer of A, B and C subunits.

The enzyme catalyses L-glutamyl-tRNA(Gln) + L-glutamine + ATP + H2O = L-glutaminyl-tRNA(Gln) + L-glutamate + ADP + phosphate + H(+). The catalysed reaction is L-aspartyl-tRNA(Asn) + L-glutamine + ATP + H2O = L-asparaginyl-tRNA(Asn) + L-glutamate + ADP + phosphate + 2 H(+). Functionally, allows the formation of correctly charged Asn-tRNA(Asn) or Gln-tRNA(Gln) through the transamidation of misacylated Asp-tRNA(Asn) or Glu-tRNA(Gln) in organisms which lack either or both of asparaginyl-tRNA or glutaminyl-tRNA synthetases. The reaction takes place in the presence of glutamine and ATP through an activated phospho-Asp-tRNA(Asn) or phospho-Glu-tRNA(Gln). This is Aspartyl/glutamyl-tRNA(Asn/Gln) amidotransferase subunit C from Leptospira borgpetersenii serovar Hardjo-bovis (strain JB197).